The sequence spans 190 residues: Potassium-transporting ATPase KdpC subunit (190 aa).

The helical transmembrane segment at 10 to 30 threads the bilayer; the sequence is TFLFLLLITGGVYPLLTTALG.

This sequence belongs to the KdpC family. In terms of assembly, the system is composed of three essential subunits: KdpA, KdpB and KdpC.

Its subcellular location is the cell inner membrane. Its function is as follows. Part of the high-affinity ATP-driven potassium transport (or Kdp) system, which catalyzes the hydrolysis of ATP coupled with the electrogenic transport of potassium into the cytoplasm. This subunit acts as a catalytic chaperone that increases the ATP-binding affinity of the ATP-hydrolyzing subunit KdpB by the formation of a transient KdpB/KdpC/ATP ternary complex. This is Potassium-transporting ATPase KdpC subunit from Escherichia coli O81 (strain ED1a).